Consider the following 503-residue polypeptide: Chromodomain Y-like protein 2 (503 aa).

The 61-residue stretch at 7–67 (YEVERIVDKR…LHLSKDKRVK (61 aa)) folds into the Chromo domain. Positions 66-177 (VKSGKQAGAS…GNGSHQPDLE (112 aa)) are disordered. Residues 88-98 (RLSHRPLEPGK) are compositionally biased toward basic and acidic residues. Basic residues predominate over residues 101 to 120 (PSSHKRKRVNSPLSRPKKGS). Residues 130–140 (KTVSYRTTPSG) show a composition bias toward polar residues.

As to quaternary structure, interacts (via chromo domain) with histone H3K9me3.

It localises to the nucleus. The polypeptide is Chromodomain Y-like protein 2 (Cdyl2) (Mus musculus (Mouse)).